The following is an 892-amino-acid chain: Alanine--tRNA ligase (892 aa).

4 residues coordinate Zn(2+): histidine 574, histidine 578, cysteine 676, and histidine 680.

This sequence belongs to the class-II aminoacyl-tRNA synthetase family. Requires Zn(2+) as cofactor.

It localises to the cytoplasm. The enzyme catalyses tRNA(Ala) + L-alanine + ATP = L-alanyl-tRNA(Ala) + AMP + diphosphate. Functionally, catalyzes the attachment of alanine to tRNA(Ala) in a two-step reaction: alanine is first activated by ATP to form Ala-AMP and then transferred to the acceptor end of tRNA(Ala). Also edits incorrectly charged Ser-tRNA(Ala) and Gly-tRNA(Ala) via its editing domain. This Prochlorococcus marinus (strain MIT 9303) protein is Alanine--tRNA ligase.